Reading from the N-terminus, the 199-residue chain is RNA-binding protein, mRNA-processing factor 2a (199 aa).

Residues 20–97 (RTLFVSGLPV…QTLRLEFAKA (78 aa)) form the RRM domain.

As to quaternary structure, interacts with Bucky ball (BUC); to mediate Balbiani body formation and oocyte polarity during early oogenesis.

The protein resides in the cytoplasm. It is found in the nucleus. The protein localises to the stress granule. Its function is as follows. RNA-binding protein involved in the regulation of smooth muscle cell differentiation and proliferation in the gastrointestinal system. RNA-binding protein localized in Balbiani body (electron-dense aggregates in the oocyte) and germ plasm during oogenesis, and may be required to maintain germ plasm mRNA translational repression. Translational regulator during topographic map formation in the visual system. Establishes oocyte polarity through interaction with Bucky ball (BUC). Acts as a pre-mRNA alternative splicing regulator. Mediates ACTN1 and FLNB alternative splicing. Likely binds to mRNA tandem CAC trinucleotide or CA dinucleotide motifs. The polypeptide is RNA-binding protein, mRNA-processing factor 2a (Danio rerio (Zebrafish)).